The following is a 401-amino-acid chain: Acetylornithine aminotransferase (401 aa).

Residues 121–122 and Phe154 each bind pyridoxal 5'-phosphate; that span reads GA. Arg157 serves as a coordination point for N(2)-acetyl-L-ornithine. Residue 239–242 coordinates pyridoxal 5'-phosphate; it reads DEVQ. Lys268 is subject to N6-(pyridoxal phosphate)lysine. Ser296 lines the N(2)-acetyl-L-ornithine pocket. Pyridoxal 5'-phosphate is bound at residue Thr297.

The protein belongs to the class-III pyridoxal-phosphate-dependent aminotransferase family. ArgD subfamily. As to quaternary structure, homodimer. Pyridoxal 5'-phosphate serves as cofactor.

It localises to the cytoplasm. It catalyses the reaction N(2)-acetyl-L-ornithine + 2-oxoglutarate = N-acetyl-L-glutamate 5-semialdehyde + L-glutamate. It functions in the pathway amino-acid biosynthesis; L-arginine biosynthesis; N(2)-acetyl-L-ornithine from L-glutamate: step 4/4. The protein is Acetylornithine aminotransferase of Myxococcus xanthus.